Reading from the N-terminus, the 316-residue chain is GPI-specific phospholipase A2-like PGAP3 (316 aa).

The signal sequence occupies residues 1-18 (MAPFLVLFLAGVVAASRG). Topologically, residues 19–93 (DREPVYRDCV…QFHGKWPFSR (75 aa)) are lumenal. Residue N35 is glycosylated (N-linked (GlcNAc...) asparagine). A helical transmembrane segment spans residues 94–114 (FLFFQEPASALASFLNGVASL). At 115 to 132 (LMLLRYRSSVPSSCQMYR) the chain is on the cytoplasmic side. Residues 133–153 (TCLAFSMVSVNAWFWSTIFHT) form a helical membrane-spanning segment. Over 154–163 (RDTALTEKMD) the chain is Lumenal. The chain crosses the membrane as a helical span at residues 164 to 180 (YFCASSVILHSIYLCCM). The Cytoplasmic segment spans residues 181-182 (RT). A helical transmembrane segment spans residues 183 to 203 (FGLQYPSIANGFGAFLVLLFA). Residues 204–218 (CHVSYLTLGRFDYSY) lie on the Lumenal side of the membrane. A helical transmembrane segment spans residues 219-239 (NMAANTGFGVLNLMWWLAWCF). Residues 240 to 251 (RRRFHQPYLWKC) lie on the Cytoplasmic side of the membrane. A helical membrane pass occupies residues 252–272 (VLVVISLQSLALLELLDFPPV). Position 273 (M273) is a topological domain, lumenal. Residues 274-293 (WILDAHALWHFSTVPLHFLF) form a helical membrane-spanning segment. At 294–316 (YSFLKDDSLYLLKINHDDIPKLD) the chain is on the cytoplasmic side.

Belongs to the PGAP3 family.

The protein localises to the golgi apparatus membrane. Functionally, involved in the fatty acid remodeling steps of GPI-anchor maturation where the unsaturated acyl chain at sn-2 of inositol phosphate is replaced by a saturated stearoyl chain. May catalyze the first step of the fatty acid remodeling, by removing the unsaturated acyl chain at sn-2 of inositol phosphate, generating a lyso-GPI intermediate. The fatty acid remodeling steps is critical for the integration of GPI-APs into lipid rafts. The protein is GPI-specific phospholipase A2-like PGAP3 of Xenopus tropicalis (Western clawed frog).